We begin with the raw amino-acid sequence, 489 residues long: Protein SOF1 (489 aa).

7 WD repeats span residues 65–105 (GHRD…EFVS), 113–158 (VTGL…YSNK), 177–214 (DGESAFQGIDSHRENSTFATGGAKIHLWDVNRLKPVSD), 217–257 (WGAD…PTQK), 259–299 (VQTM…RSLN), 303–342 (DHVSAVMDVDFSPTGDEIVTGSYDKSIRIYKTNHGHSREI), and 346–385 (KRMQHVFQVKYSMDSKYIISGSDDGNVRLWRSKAWERSNV). Composition is skewed to basic and acidic residues over residues 440-459 (REANERRTRKDMPYISERKK) and 466-489 (HKYEDSGRDRKRRKEDDKRDTQEK). A disordered region spans residues 440 to 489 (REANERRTRKDMPYISERKKQIVGTVHKYEDSGRDRKRRKEDDKRDTQEK).

It belongs to the WD repeat DCAF13/WDSOF1 family. In terms of assembly, interacts with snoRNA U3. Interacts with NOP1 and MPP10. Component of the ribosomal small subunit (SSU) processome composed of at least 40 protein subunits and snoRNA U3.

Its subcellular location is the nucleus. It is found in the nucleolus. Functionally, required for ribosomal RNA processing. The protein is Protein SOF1 (SOF1) of Saccharomyces cerevisiae (strain ATCC 204508 / S288c) (Baker's yeast).